Here is a 388-residue protein sequence, read N- to C-terminus: Chorismate synthase (388 aa).

NADP(+) contacts are provided by R39 and R45. Residues 130–132, 251–252, G296, 311–315, and R337 each bind FMN; these read RSS, NA, and KPIPT.

The protein belongs to the chorismate synthase family. As to quaternary structure, homotetramer. It depends on FMNH2 as a cofactor.

It carries out the reaction 5-O-(1-carboxyvinyl)-3-phosphoshikimate = chorismate + phosphate. The protein operates within metabolic intermediate biosynthesis; chorismate biosynthesis; chorismate from D-erythrose 4-phosphate and phosphoenolpyruvate: step 7/7. Functionally, catalyzes the anti-1,4-elimination of the C-3 phosphate and the C-6 proR hydrogen from 5-enolpyruvylshikimate-3-phosphate (EPSP) to yield chorismate, which is the branch point compound that serves as the starting substrate for the three terminal pathways of aromatic amino acid biosynthesis. This reaction introduces a second double bond into the aromatic ring system. The chain is Chorismate synthase from Streptococcus pyogenes serotype M5 (strain Manfredo).